Reading from the N-terminus, the 497-residue chain is ATP-dependent RNA helicase CshA (497 aa).

The short motif at 1 to 29 (MKFSELGLSDSLLKAIKRSGYEEATPIQE) is the Q motif element. Residues 32 to 202 (IPMVLEGKDV…VQFMSDPETV (171 aa)) form the Helicase ATP-binding domain. 45–52 (AQTGTGKT) contacts ATP. A DEAD box motif is present at residues 150 to 153 (DEAD). A Helicase C-terminal domain is found at 228–373 (DIMTRLIDVQ…PLKPPTAEEA (146 aa)). The disordered stretch occupies residues 425–497 (AASEVPVKIT…SFNIRHRKEN (73 aa)). A compositionally biased stretch (low complexity) spans 448-458 (RNGNRNNSHGG). Basic residues-rich tracts occupy residues 459 to 473 (NHYR…QHGS) and 481 to 497 (KSHS…RKEN).

The protein belongs to the DEAD box helicase family. CshA subfamily. In terms of assembly, oligomerizes, may be a member of the RNA degradosome.

Its subcellular location is the cytoplasm. The protein resides in the cell membrane. The catalysed reaction is ATP + H2O = ADP + phosphate + H(+). DEAD-box RNA helicase possibly involved in RNA degradation. Unwinds dsRNA in both 5'- and 3'-directions, has RNA-dependent ATPase activity. Over-expression leads to cell aggregation. This chain is ATP-dependent RNA helicase CshA, found in Limosilactobacillus reuteri (Lactobacillus reuteri).